Here is a 731-residue protein sequence, read N- to C-terminus: 1,4-alpha-glucan branching enzyme GlgB (731 aa).

The Nucleophile role is filled by Asp408. Glu461 acts as the Proton donor in catalysis.

Belongs to the glycosyl hydrolase 13 family. GlgB subfamily. As to quaternary structure, monomer.

It carries out the reaction Transfers a segment of a (1-&gt;4)-alpha-D-glucan chain to a primary hydroxy group in a similar glucan chain.. It participates in glycan biosynthesis; glycogen biosynthesis. Catalyzes the formation of the alpha-1,6-glucosidic linkages in glycogen by scission of a 1,4-alpha-linked oligosaccharide from growing alpha-1,4-glucan chains and the subsequent attachment of the oligosaccharide to the alpha-1,6 position. The protein is 1,4-alpha-glucan branching enzyme GlgB of Corynebacterium efficiens (strain DSM 44549 / YS-314 / AJ 12310 / JCM 11189 / NBRC 100395).